The sequence spans 211 residues: Redox-sensing transcriptional repressor Rex (211 aa).

The segment at residues 16–55 (LYYRYLLILNEEGKDKVSSTELSEAVQVDSASIRRDFSYF) is a DNA-binding region (H-T-H motif). 90-95 (GVGNLG) contributes to the NAD(+) binding site.

It belongs to the transcriptional regulatory Rex family. In terms of assembly, homodimer.

Its subcellular location is the cytoplasm. Functionally, modulates transcription in response to changes in cellular NADH/NAD(+) redox state. The protein is Redox-sensing transcriptional repressor Rex of Lactobacillus acidophilus (strain ATCC 700396 / NCK56 / N2 / NCFM).